Here is a 2289-residue protein sequence, read N- to C-terminus: MKGHQFKSWIFELREIVREIKNSHYFLDSWTQFNSVGSFIHIFFHQERFRKLLDPRIFSILLLRNSQGSTSNRYFSIKGVVLFVVAALLYRINNRNMVESKNLYLKGLLPIPMNSIGPRNDTSEESFGSCNINRLVVSLLFLTKGKKISESCFRDPKESTWVLPITQKCIMPESNWSSRWWRNWIGKKRDFCCKISNETVAGIDISFKEKDIKYLEFLFVYYMDDPIRKGHDWELFDRLSPSKRRNIINLNSGQLFEILVKDWICYLMFAFREKIPIEVEGFFKQQGAGSTIQSNDIEHVSHLFSRNKWAISLQNCAQFHMWQFHQDLFVSWGKNPHESDFFRKISRENWIWLDNVWLVNKDRFFSKVRNVSSNIQYDSTRSSFVQVTDSSQLNGSSDQFIDPFDSISNEDSEYHTLINQREIQQLKERSILLDPSFIQTEGREIESDRFPKYLSDYSSMPRLFTEREKRMIIHSLPEESEEFLGNPTRAIRSFFSDRWSELHLGSNPTERSTRDQKLLKKEQDVSFVPSRRSENKEIVNIFKIITYLQNTVSIHPISSDLGCDMVPKDELDMDSSNKISFLNKNPFFDLFHLFHERKRGGYTLRHESEERFQEMADLFTLSITEPDLVYHKGFAFSIDSYGLDQRQFLKEVFNFRDESKKKSLLVLPPIFYEENESFYRRIRKNWVRISCGNYLEDPKRVVFASNNIVEAVNQYRLIRNMIQIQFQYSPYGYIRNVLNRFFLMKRPDRNFEYGIQRDLIGNDTLNHRTIMKDTINQHLSNLKKSQKKWFDPLIFLSQTERSINRDPNAYRYKWSNGSKNFQEHLEHFVSERKSRFQVVFDQLCINQYSIDWSEVIDKKDLSKSLRFFLSKLLRFFLSKLLLFLSKLLLFLSNSLPFFFVSFENIPIHRSEIHIYELKGPNDQLCNQLLESIGLQIVHLKKLKPFLLDDHNTSQKSKFLINGGTISPFLFNKIPKWMIDSFHTRKNRRKSFDNTDSYFSIVSHDQDNWLNPAKPFQRSSLISSFSKANRLRFLNNPHHFCFYCNKRFPFYVEKARLNNSDFTYGQFLTILFIHNKIFSSCGGKKKHAFLERDTISPSSIESQVSNIFISNDFPQSGDERYNLYKSFHFPIRSDPLVRRAIYSIADISGTPLIEGQRVNFERTYCQTLSDMNLSDSEEKSLHQYLNFNSNMGLIHTPCSEKYLQRKKRSLCLKKCVDKGQMDRPFQRDSAFSTLSKWNLFQTYMPWFFTSTGYKYLNLIFLDTFSDLLRILSSSQKFVSIFHDIMHGVDISWRILQKKLCLPQRNLISEISSKSLHNLLLSEEMIHRNNESSLISTHLRSPNVREVLYSILFLLLVAGYIVRTHLLFVSRAYSELQTEFEKIKSLMIPSYMIELRKLLDRYPTSELNSFWLKNLFLVALEQLGDCLEEIRGSGGNMLWGGDPAYGVKSIRSKKKDLKINFIDIIDLISIIPNPINRITFSRNTRHLSHTSKEIYSLIRKRKNVSGDWIDDKIESWVANSDSIDDKEREFLVQFSTLRAEKRIDQILLSLTHSDHLSKNDSGYQMIEQPGTIYLRYLVDIHKKYLMNYEFNTSCLAERRIFLAHYQTITYSQTSCGANSFHFPSHGKPFSLRLALSPSRSILVIGSIGTGRSYLVKYLATNSYVPFITVFLNKFLDNKPKGFFIDDIDIDDSDDIDASNDIDRELDTELELLTMMNALTMDMMSEIDRFYITLQFELAKAMSPCIIWIPNIHDLDVNESSYLALGLLVNSLSRDCERCSTRNILVIASTHIPQKVDPALIAPNKLNTCIKIRRLLIPQQRKHFFTLSYTRGFHLENKMFHTNGFESITMGSSARDLVALTNEALSISITQKKSIIDTNTIRSALHSQTWDLRSQVRSVQDHGILFYQIGRAVAQNVLISNCPIDPISIYMKKKSCNEGDSYLYKWYFELGTSMKKFTILLYLLSCSAGSVAQDLWSLPVPDEKNRITSYGFIENDSDLVHGLLEVQGALVGSSRTEKDCSQFDNDRVTLLFRSEPRDPLYMMQDGSCSIVDQRFLYEKYESEFEEGEGEGVLDPQQIEEDLFNHIVWAPRIWRPRGFLFDCIERPNELGFPYLAGSFRGKRIIYDEKYELQENDSEFLQSGTMQYQRRDRFSKEQGFFRISQFIWDPADPLFFLFKDQPFVSVFSHREFFADEEMSKGLLTSQTDPPTSIYKRWFIKNTQEKHFELLIQRQRWLRTNSSLSNGFFRSNTRSESYQYLSNLFLSNGTLLDRMTKTLLKKRWLFSDEMKIGFM.

1643-1650 (GSIGTGRS) serves as a coordination point for ATP.

The protein belongs to the Ycf2 family.

It localises to the plastid. It is found in the chloroplast stroma. Its function is as follows. Probable ATPase of unknown function. Its presence in a non-photosynthetic plant (Epifagus virginiana) and experiments in tobacco indicate that it has an essential function which is probably not related to photosynthesis. This Capsella bursa-pastoris (Shepherd's purse) protein is Protein Ycf2.